The sequence spans 108 residues: Pumilarin (108 aa).

Residues 1-38 (MTETKNEIKLHVLFGALAVGFLMLALFSFSLQMLPVAD) constitute a propeptide that is removed on maturation. Residues 39–108 (LAKEFGIPGS…KKGRKAVIAW (70 aa)) constitute a cross-link (cyclopeptide (Leu-Trp)).

Post-translationally, the cross-link permits a high resistance to proteolysis. Is more resistant to specific proteases than to unspecific proteases.

Its subcellular location is the secreted. In terms of biological role, cyclopeptide antibiotic that inhibits both Gram-positive and Gram-negative bacteria. Shows potent to weak activities against M.flavus (MIC=3 ug/ml), B.cereus (MIC=12 ug/ml), B.pumilus (MIC=12 ug/ml), E.coli (MIC=12 ug/ml), and S.pneumoniae (MIC=47 ug/ml). May act by forming pores. This chain is Pumilarin, found in Bacillus safensis.